The chain runs to 295 residues: Ribosomal protein L11 methyltransferase (295 aa).

Residues Thr150, Gly171, Asp193, and Asn232 each contribute to the S-adenosyl-L-methionine site.

It belongs to the methyltransferase superfamily. PrmA family.

It is found in the cytoplasm. The catalysed reaction is L-lysyl-[protein] + 3 S-adenosyl-L-methionine = N(6),N(6),N(6)-trimethyl-L-lysyl-[protein] + 3 S-adenosyl-L-homocysteine + 3 H(+). Functionally, methylates ribosomal protein L11. This chain is Ribosomal protein L11 methyltransferase, found in Neisseria meningitidis serogroup A / serotype 4A (strain DSM 15465 / Z2491).